Here is a 215-residue protein sequence, read N- to C-terminus: NAD(P)H-hydrate epimerase (215 aa).

Residues 10–211 (AQRYDAHATN…DIGIYAQDRV (202 aa)) form the YjeF N-terminal domain. 58-62 (NNGGD) serves as a coordination point for (6S)-NADPHX. 2 residues coordinate K(+): Asn59 and Asp121. Residues 125–131 (GVGLTRD) and Asp154 each bind (6S)-NADPHX. Ser157 lines the K(+) pocket.

The protein belongs to the NnrE/AIBP family. Requires K(+) as cofactor.

It carries out the reaction (6R)-NADHX = (6S)-NADHX. The catalysed reaction is (6R)-NADPHX = (6S)-NADPHX. Its function is as follows. Catalyzes the epimerization of the S- and R-forms of NAD(P)HX, a damaged form of NAD(P)H that is a result of enzymatic or heat-dependent hydration. This is a prerequisite for the S-specific NAD(P)H-hydrate dehydratase to allow the repair of both epimers of NAD(P)HX. The polypeptide is NAD(P)H-hydrate epimerase (Levilactobacillus brevis (strain ATCC 367 / BCRC 12310 / CIP 105137 / JCM 1170 / LMG 11437 / NCIMB 947 / NCTC 947) (Lactobacillus brevis)).